The sequence spans 315 residues: tRNA pseudouridine synthase B (315 aa).

Residue D47 is the Nucleophile of the active site.

Belongs to the pseudouridine synthase TruB family. Type 1 subfamily.

It carries out the reaction uridine(55) in tRNA = pseudouridine(55) in tRNA. Its function is as follows. Responsible for synthesis of pseudouridine from uracil-55 in the psi GC loop of transfer RNAs. In Shewanella amazonensis (strain ATCC BAA-1098 / SB2B), this protein is tRNA pseudouridine synthase B.